The following is a 173-amino-acid chain: Soluble secreted antigen MPT53 (173 aa).

Positions 1-38 (MSLRLVSPIKAFADGIVAVAIAVVLMFGLANTPRAVAA) are cleaved as a signal peptide. The cysteines at positions 73 and 76 are disulfide-linked.

Belongs to the thioredoxin family.

Its subcellular location is the secreted. In terms of biological role, disulfide oxidoreductase that catalyzes the oxidation of reduced, unfolded secreted proteins to form disulfide bonds. Despite a weak homology to thioredoxin this cannot serve as a substrate for thioredoxin reductase. This Mycobacterium bovis (strain ATCC BAA-935 / AF2122/97) protein is Soluble secreted antigen MPT53 (mpt53).